The chain runs to 319 residues: Ribonuclease Z (319 aa).

Zn(2+) contacts are provided by H62, H64, D66, H67, H145, D215, and H273. D66 serves as the catalytic Proton acceptor.

The protein belongs to the RNase Z family. Homodimer. The cofactor is Zn(2+).

It carries out the reaction Endonucleolytic cleavage of RNA, removing extra 3' nucleotides from tRNA precursor, generating 3' termini of tRNAs. A 3'-hydroxy group is left at the tRNA terminus and a 5'-phosphoryl group is left at the trailer molecule.. Zinc phosphodiesterase, which displays some tRNA 3'-processing endonuclease activity. Probably involved in tRNA maturation, by removing a 3'-trailer from precursor tRNA. The polypeptide is Ribonuclease Z (Borrelia garinii subsp. bavariensis (strain ATCC BAA-2496 / DSM 23469 / PBi) (Borreliella bavariensis)).